The sequence spans 987 residues: Kinesin-like protein KIN-14G (987 aa).

A Calponin-homology (CH) domain is found at 44-163 (SLRRYEAAGW…CILALKSYSE (120 aa)). The tract at residues 201 to 221 (ISRTQSTDMLSTDQPLSSDGD) is disordered. Residues 394–721 (NIRVYCRVRP…LKFAERVGSV (328 aa)) form the Kinesin motor domain. ATP is bound at residue 478–485 (GQTGSGKT). Residues 725-754 (AARVNKDNSEVKELKEQIANLKMALVRKGN) adopt a coiled-coil conformation. Disordered stretches follow at residues 759 to 849 (QPTA…ESKS) and 927 to 987 (NIQN…SLGT). Residues 788-797 (MGNTSNNSRP) show a composition bias toward polar residues. Residues 840 to 849 (GKDEDRESKS) are compositionally biased toward basic and acidic residues. The segment covering 964 to 974 (PPNTVNSQPQR) has biased composition (polar residues).

Belongs to the TRAFAC class myosin-kinesin ATPase superfamily. Kinesin family. KIN-14 subfamily. In terms of assembly, monomer. In terms of tissue distribution, flower specific.

It localises to the cytoplasm. It is found in the cytoskeleton. In terms of biological role, microtubule-binding motor protein. This is Kinesin-like protein KIN-14G from Arabidopsis thaliana (Mouse-ear cress).